The following is a 315-amino-acid chain: tRNA dimethylallyltransferase (315 aa).

9–16 is a binding site for ATP; that stretch reads GPTASGKT. Substrate is bound at residue 11 to 16; that stretch reads TASGKT. Interaction with substrate tRNA regions lie at residues 34-37 and 158-162; these read DSLL and QRIQR.

It belongs to the IPP transferase family. As to quaternary structure, monomer. The cofactor is Mg(2+).

The catalysed reaction is adenosine(37) in tRNA + dimethylallyl diphosphate = N(6)-dimethylallyladenosine(37) in tRNA + diphosphate. Functionally, catalyzes the transfer of a dimethylallyl group onto the adenine at position 37 in tRNAs that read codons beginning with uridine, leading to the formation of N6-(dimethylallyl)adenosine (i(6)A). This is tRNA dimethylallyltransferase from Acidithiobacillus ferrooxidans (strain ATCC 53993 / BNL-5-31) (Leptospirillum ferrooxidans (ATCC 53993)).